A 443-amino-acid polypeptide reads, in one-letter code: Amino-acid acetyltransferase (443 aa).

The region spanning 296–434 is the N-acetyltransferase domain; the sequence is EQIRRATIND…KKLMYNYQRR (139 aa).

It belongs to the acetyltransferase family. ArgA subfamily. In terms of assembly, homohexamer.

It localises to the cytoplasm. It carries out the reaction L-glutamate + acetyl-CoA = N-acetyl-L-glutamate + CoA + H(+). It participates in amino-acid biosynthesis; L-arginine biosynthesis; N(2)-acetyl-L-ornithine from L-glutamate: step 1/4. The sequence is that of Amino-acid acetyltransferase from Escherichia fergusonii (strain ATCC 35469 / DSM 13698 / CCUG 18766 / IAM 14443 / JCM 21226 / LMG 7866 / NBRC 102419 / NCTC 12128 / CDC 0568-73).